We begin with the raw amino-acid sequence, 136 residues long: Peptide deformylase (136 aa).

The Fe cation site is built by cysteine 85 and histidine 126. Glutamate 127 is an active-site residue. Histidine 130 contacts Fe cation.

This sequence belongs to the polypeptide deformylase family. Requires Fe(2+) as cofactor.

The catalysed reaction is N-terminal N-formyl-L-methionyl-[peptide] + H2O = N-terminal L-methionyl-[peptide] + formate. Functionally, removes the formyl group from the N-terminal Met of newly synthesized proteins. Requires at least a dipeptide for an efficient rate of reaction. N-terminal L-methionine is a prerequisite for activity but the enzyme has broad specificity at other positions. The polypeptide is Peptide deformylase (Clostridium beijerinckii (strain ATCC 51743 / NCIMB 8052) (Clostridium acetobutylicum)).